A 266-amino-acid polypeptide reads, in one-letter code: Interleukin-1 beta (266 aa).

Positions 1–113 (MATVPEPTNE…ETYDDDLLCD (113 aa)) are excised as a propeptide.

It belongs to the IL-1 family. As to quaternary structure, monomer. In its precursor form, weakly interacts with full-length MEFV; the mature cytokine does not interact at all. Interacts with integrins ITGAV:ITGBV and ITGA5:ITGB1; integrin-binding is required for IL1B signaling. Interacts with cargo receptor TMED10; the interaction is direct and is required for the secretion of IL1B mature form. Interacts with HSP90AB1; the interaction facilitates cargo translocation into the ERGIC. Interacts with HSP90B1; the interaction facilitates cargo translocation into the ERGIC.

It localises to the cytoplasm. The protein resides in the cytosol. It is found in the secreted. Its subcellular location is the lysosome. The protein localises to the extracellular exosome. Functionally, potent pro-inflammatory cytokine. Initially discovered as the major endogenous pyrogen, induces prostaglandin synthesis, neutrophil influx and activation, T-cell activation and cytokine production, B-cell activation and antibody production, and fibroblast proliferation and collagen production. Promotes Th17 differentiation of T-cells. Synergizes with IL12/interleukin-12 to induce IFNG synthesis from T-helper 1 (Th1) cells. Plays a role in angiogenesis by inducing VEGF production synergistically with TNF and IL6. Involved in transduction of inflammation downstream of pyroptosis: its mature form is specifically released in the extracellular milieu by passing through the gasdermin-D (GSDMD) pore. The chain is Interleukin-1 beta (IL1B) from Delphinapterus leucas (Beluga whale).